The sequence spans 634 residues: MSIYVTFKGQVQKICISSGTILQELISTHYPNKNIIACAIDGIMADINTEINENQKIELYDFDSKEGQHVYWHSSAHILGNALVNLYQCKLVNGPALDEGFYYDIDIERPIREEDFADIEKEMQRIINKNIDFRKKMIKKDDLLKMYKDNDYKVHFINNIPDNLISVYYNDEFYDMCQGPHIQSTGLVKAFKILKSSSCYFLNSADNQILQRIYGISFPNKTLLKEYEEKVQKAKEMDHRKIGKELNLYFFHEYSPGSCFWLPDGVVIYNRLMEFLRKEYIKRGFKEVITPNIFHIDLWKESGHYQNYKENIYGISGEDFALKPMNCPGHCIIFKSVERSYKELPLRYADFGVLHRNECSGSLTGLTRVRRFQQDDAHIFTSKSSIKEEIENAIGFLKTVYSIFNFKYELFLSTRPTKFLGTIEEWDVAEKSLKDAIIDSGHTYTLNEGDGAFYGPKIDIILHDILNRKIQCATIQLDFQLPQRFDLKFKNELGMYETPVIIHRAILGSFERFIAILIESYGKHLPFWLHPRQVGLVTIDCKHENYMYTVEKSMLNVVLDLGIRKYTDPKDTLNKKIRKATLDGCKIICILGDKEMEKNEVNVRIGNKTRTYKIEELLEKIKVSIETKKEFIFN.

One can recognise a TGS domain in the interval 1–61; sequence MSIYVTFKGQ…NENQKIELYD (61 aa).

Belongs to the class-II aminoacyl-tRNA synthetase family.

It is found in the cytoplasm. It carries out the reaction tRNA(Thr) + L-threonine + ATP = L-threonyl-tRNA(Thr) + AMP + diphosphate + H(+). In Enterocytozoon bieneusi (strain H348) (Microsporidian parasite), this protein is Probable threonine--tRNA ligase, cytoplasmic.